The sequence spans 562 residues: Formate--tetrahydrofolate ligase (562 aa).

71–78 lines the ATP pocket; it reads TPAGEGKS.

It belongs to the formate--tetrahydrofolate ligase family.

It catalyses the reaction (6S)-5,6,7,8-tetrahydrofolate + formate + ATP = (6R)-10-formyltetrahydrofolate + ADP + phosphate. It participates in one-carbon metabolism; tetrahydrofolate interconversion. In Bacillus cereus (strain AH187), this protein is Formate--tetrahydrofolate ligase.